Reading from the N-terminus, the 281-residue chain is MKLAAMIKKMCPSDSELSIPAKNCYRMVILGSSKVGKTAIVSRFLTGRFEDAYTPTIEDFHRKFYSIRGEVYQLDILDTSGNHPFPAMRRLSILTGDVFILVFSLDNRDSFEEVQRLRQQILDTKSCLKNKTKENVDVPLVICGNKGDRDFYREVDQREIEQLVGDDPQRCAYFEISAKKNSSLDQMFRALFAMAKLPSEMSPDLHRKVSVQYCDVLHKKALRNKKLLRAGSGGGGGDPGDAFGIVAPFARRPSVHSDLMYIREKASAGSQAKDKERCVIS.

C11 carries the S-nitrosocysteine modification. 31 to 38 lines the GTP pocket; sequence GSSKVGKT. The Effector region signature appears at 53-61; the sequence is YTPTIEDFH. GTP contacts are provided by residues 78–82 and 145–148; these read DTSGN and NKGD. Position 278 is a cysteine methyl ester (C278). The S-farnesyl cysteine moiety is linked to residue C278. Residues 279–281 constitute a propeptide, removed in mature form; sequence VIS.

It belongs to the small GTPase superfamily. RasD family. In terms of assembly, forms a ternary complex with CAPON and NOS1. Component of a complex, at least composed of APBB1, RASD1/DEXRAS1 and APP. Interacts with APBB1/FE65. In terms of processing, S-nitrosylation stimulates guanine-nucleotide exchange activity. As to expression, expressed in a variety of tissues including heart, cardiovascular tissues, brain, placenta, lung, liver, skeletal muscle, kidney, pancreas, gastrointestinal and reproductive tissues.

Its subcellular location is the cell membrane. It is found in the cytoplasm. The protein localises to the perinuclear region. The protein resides in the nucleus. Functionally, small GTPase. Negatively regulates the transcription regulation activity of the APBB1/FE65-APP complex via its interaction with APBB1/FE65. In Homo sapiens (Human), this protein is Dexamethasone-induced Ras-related protein 1 (RASD1).